Here is a 349-residue protein sequence, read N- to C-terminus: Anthranilate phosphoribosyltransferase (349 aa).

5-phospho-alpha-D-ribose 1-diphosphate-binding positions include Gly-82, 85–86, 92–95, 110–118, and Ser-122; these read GD, NVST, and KHGNRAVSG. Residue Gly-82 participates in anthranilate binding. Mg(2+) is bound at residue Ser-94. An anthranilate-binding site is contributed by Asn-113. Arg-168 is a binding site for anthranilate. Mg(2+) is bound by residues Asp-227 and Glu-228.

It belongs to the anthranilate phosphoribosyltransferase family. As to quaternary structure, homodimer. The cofactor is Mg(2+).

The enzyme catalyses N-(5-phospho-beta-D-ribosyl)anthranilate + diphosphate = 5-phospho-alpha-D-ribose 1-diphosphate + anthranilate. The protein operates within amino-acid biosynthesis; L-tryptophan biosynthesis; L-tryptophan from chorismate: step 2/5. Its function is as follows. Catalyzes the transfer of the phosphoribosyl group of 5-phosphorylribose-1-pyrophosphate (PRPP) to anthranilate to yield N-(5'-phosphoribosyl)-anthranilate (PRA). The polypeptide is Anthranilate phosphoribosyltransferase (Pseudomonas putida (Arthrobacter siderocapsulatus)).